The following is a 943-amino-acid chain: Calcium-activated chloride channel regulator 2 (943 aa).

Residues 1–31 form the signal peptide; that stretch reads MTQRSIAGPICNLKFVTLLVALSSELPFLGA. The Extracellular portion of the chain corresponds to 32–901; sequence GVQLQDNGYN…SDPVPARDYL (870 aa). The metalloprotease domain stretch occupies residues 54 to 205; that stretch reads NQNLISNIKE…CSSDITGIFV (152 aa). 2 N-linked (GlcNAc...) asparagine glycosylation sites follow: Asn-74 and Asn-150. Residue His-164 participates in Zn(2+) binding. Glu-165 is an active-site residue. Zn(2+) is bound by residues His-168 and Asp-175. A glycan (N-linked (GlcNAc...) asparagine) is linked at Asn-231. A VWFA domain is found at 311–483; that stretch reads VVCLVLDVSS…NSMIDAFSRI (173 aa). Residues Asn-522 and Asn-822 are each glycosylated (N-linked (GlcNAc...) asparagine). The helical transmembrane segment at 902–922 threads the bilayer; that stretch reads ILKGVLTAMGLIGIICLIIVV. At 923–943 the chain is on the cytoplasmic side; it reads THHTLSRKKRADKKENGTKLL.

The protein belongs to the CLCR family. In terms of processing, the 141 kDa mature form is autoproteolytically cleaved by the metalloprotease domain, producing a 109 kDa form and a 35 kDa form. The cleavage is necessary for calcium-activated chloride channel (CaCC) activation activity. Post-translationally, N-glycosylated. In terms of tissue distribution, expressed in cornea, skin, vagina, esophagus, and larynx (at protein level). Expressed in trachea and mammary gland. Weakly expressed in testis and kidney. Highly expressed in corneal epithelium, colon and trachea. Moderately expressed in brain, urogenital organs, bladder, uterus and prostate. Highly expressed in tissues containing stratified epithelium including cornea, esophagus, larynx, skin and vagina than those tissues which contain only epithelial monolayers. Expressed in normal breast epithelium but not in breast cancer. Highly expressed during epithelial stratification. Expressed in endothelial cells of lung. Expressed selectively in endothelia of small pulmonary arteries, arterioles, and subpleural and interlobular venules.

It is found in the cell membrane. The protein resides in the basal cell membrane. It localises to the cell junction. Its subcellular location is the secreted. Functionally, plays a role in modulating chloride current across the plasma membrane in a calcium-dependent manner, and cell adhesion. Involved in basal cell adhesion and/or stratification of squamous epithelia. May act as a tumor suppressor in breast and colorectal cancer. Plays a key role for cell adhesion in the beginning stages of lung metastasis via the binding to ITGB4. The sequence is that of Calcium-activated chloride channel regulator 2 (CLCA2) from Homo sapiens (Human).